The primary structure comprises 281 residues: Probable catechol O-methyltransferase 2 (281 aa).

Ile78, Glu100, Ser108, Glu127, Val128, Ala156, and Asp183 together coordinate S-adenosyl-L-methionine. Asp183 contacts Mg(2+). Lys186 is a binding site for substrate. Mg(2+) contacts are provided by Asp211 and Asn212. Asn212 lines the substrate pocket.

It belongs to the class I-like SAM-binding methyltransferase superfamily. Cation-dependent O-methyltransferase family. It depends on Mg(2+) as a cofactor.

It localises to the vacuole. It carries out the reaction a catechol + S-adenosyl-L-methionine = a guaiacol + S-adenosyl-L-homocysteine + H(+). This Schizosaccharomyces pombe (strain 972 / ATCC 24843) (Fission yeast) protein is Probable catechol O-methyltransferase 2.